An 843-amino-acid chain; its full sequence is MSVQPETETGTAAVATEGPEEGTYSFAAMEAKWPQVWEDLKVFTPVDDGSRERRYVLDMFPYPSGDLHMGHAEAFAMGDVVARYLRQKGYDVLHPIGWDSFGLPAENAAIKRNAHPSEWTYANIDTQAASFKRYAISADWSRRLHTSDPEYYRWTQWLFKRFYERGLAYRKDSPVNWCPKDQTVLANEQVVNGACERCGTAVTKKSLNQWYFKITDYADRLLDDMDELRGHWPERVLAMQKNWIGRSEGAHVNFVIEAAGDKPAKDVTVFTTRPDTLYGATFFVVAADAPMAVELVTDEHAAALDAYREQVKALSEIERQSTEREKTGVFTGRYAVNPLNGEKLPVWAADYVLADYGTGAIMAVPAHDQRDLDFARTFDLPVRAVLDTGEDDPAVTGKATAGEGTLINSGVLDGLPKAEAIPTAIDMLEKQGTGEKFVNFRLRDWLLSRQRFWGTPIPIIHCPACGEVPVPDDQLPVTLPADLRGEDLSPKGTSPLAAAEAWVNVECPNCHGPAKRDTDTMDTFVDSSWYFLRFVSPQYTEGPFDPKKINDWMPVGQYVGGVEHAILHLLYARFFTKVIHDLGMIDADEPFSALLNQGQVLNGGKAMSKSLGNGVDLGEQLDKYGVDAVRLTMIFASPPEDDVDWADVSPSGSAKFLARAWRLAQDVSSAPGADAAQGDRALRSVTHRTIADAAALLDSNKFNVVVAKLMELVNATRKTIDAASGAGGADPAVREAAEAVAVILSLFAPYTAEDMWNVLGHPASVANAGWPSHDEALLVQDTVTAVVQVQGKVRDRLEVSPEIGEDELRELALASENVQRALDGRGIRTVIVRAPKLVNIVPA.

A 'HIGH' region motif is present at residues 61–71 (PYPSGDLHMGH). The 'KMSKS' region signature appears at 606-610 (AMSKS). Position 609 (Lys-609) interacts with ATP.

This sequence belongs to the class-I aminoacyl-tRNA synthetase family.

Its subcellular location is the cytoplasm. It catalyses the reaction tRNA(Leu) + L-leucine + ATP = L-leucyl-tRNA(Leu) + AMP + diphosphate. The polypeptide is Leucine--tRNA ligase (Arthrobacter sp. (strain FB24)).